Here is a 215-residue protein sequence, read N- to C-terminus: MLQVYLVRHGETQWNAERRIQGQSDSPLTAKGEQQARQVAERARTLGITHIIASDLGRTQQTARIIADACGCDIILDPRLRELDMGVLEKRHVDSLTDEEEGWRRTLVNGTEDGRIPDGESMQELSVRVQAALADCLKLPEGSRPLLVSHGIALGCLVSTILGLPAYAERRLRLRNCSISRIDYQESPWLASGWVVEMAGDISHLDAPALDELQR.

Residues 8 to 15, 21 to 22, R58, 82 to 85, 104 to 105, and 151 to 152 each bind substrate; these read RHGETQWN, QG, ELDM, RR, and GI. The active-site Tele-phosphohistidine intermediate is H9. The Proton donor/acceptor role is filled by E82.

Belongs to the phosphoglycerate mutase family. GpmB subfamily.

It carries out the reaction (2R)-2-phosphoglycerate = (2R)-3-phosphoglycerate. The protein operates within carbohydrate degradation; glycolysis; pyruvate from D-glyceraldehyde 3-phosphate: step 3/5. This Enterobacter sp. (strain 638) protein is Probable phosphoglycerate mutase GpmB.